Consider the following 151-residue polypeptide: Ribosomal RNA large subunit methyltransferase H (151 aa).

Residues Ala101 and 119 to 124 (LSEMTF) contribute to the S-adenosyl-L-methionine site.

It belongs to the RNA methyltransferase RlmH family. Homodimer.

It is found in the cytoplasm. It catalyses the reaction pseudouridine(1915) in 23S rRNA + S-adenosyl-L-methionine = N(3)-methylpseudouridine(1915) in 23S rRNA + S-adenosyl-L-homocysteine + H(+). In terms of biological role, specifically methylates the pseudouridine at position 1915 (m3Psi1915) in 23S rRNA. The sequence is that of Ribosomal RNA large subunit methyltransferase H from Helicobacter pylori (strain G27).